A 336-amino-acid chain; its full sequence is F-box protein PP2-B1 (336 aa).

The interval 1–22 (MEQIHGGDSNSGGGGGGSSRND) is disordered. Residues 9–18 (SNSGGGGGGS) are compositionally biased toward gly residues. Residues 29 to 75 (ASRFDALPEDCISKVISHTSPRDACVVASVSKSVKSAAQSDLVWEMF) enclose the F-box domain.

In terms of assembly, part of a SCF (ASK-cullin-F-box) protein ligase complex. Interacts with SKP1A/ASK1 and SPK1B/ASK2.

It localises to the nucleus. Its pathway is protein modification; protein ubiquitination. Component of SCF(ASK-cullin-F-box) E3 ubiquitin ligase complexes, which may mediate the ubiquitination and subsequent proteasomal degradation of target proteins. In Arabidopsis thaliana (Mouse-ear cress), this protein is F-box protein PP2-B1 (PP2B1).